Consider the following 256-residue polypeptide: Dihydromonacolin L-[lovastatin nonaketide synthase] thioesterase (256 aa).

Residues Ser122, Asp201, and His229 each act as charge relay system in the active site.

Belongs to the LovG family.

It carries out the reaction dihydromonacolin L-[lovastatin nonaketide synthase] + H2O = holo-[lovastatin nonaketide synthase] + dihydromonacolin L carboxylate + H(+). It functions in the pathway polyketide biosynthesis; lovastatin biosynthesis. In terms of biological role, esterase; part of the gene cluster that mediates the biosynthesis of lovastatin (also known as mevinolin, mevacor or monacolin K), a hypolipidemic inhibitor of (3S)-hydroxymethylglutaryl-coenzyme A (HMG-CoA) reductase (HMGR). The first step in the biosynthesis of lovastatin is the production of dihydromonacolin L acid by the lovastatin nonaketide synthase lovB and the trans-acting enoyl reductase lovC via condensation of one acetyl-CoA unit and 8 malonyl-CoA units. Dihydromonacolin L acid is released from lovB by the thioesterase lovG. Next, dihydromonacolin L acid is oxidized by the dihydromonacolin L monooxygenase lovA twice to form monacolin J acid. The 2-methylbutyrate moiety of lovastatin is synthesized by the lovastatin diketide synthase lovF via condensation of one acetyl-CoA unit and one malonyl-CoA unit. Finally, the covalent attachment of this moiety to monacolin J acid is catalyzed by the transesterase lovD to yield lovastatin. LovD has broad substrate specificity and can also convert monacolin J to simvastatin using alpha-dimethylbutanoyl-S-methyl-3-mercaptopropionate (DMB-S-MMP) as the thioester acyl donor, and can also catalyze the reverse reaction and function as hydrolase in vitro. LovD has much higher activity with LovF-bound 2-methylbutanoate than with free diketide substrates. Functionally, esterase that catalyzes the release of covalently bound dihydromonacolin L from LovB during lovastatin biosynthesis. The sequence is that of Dihydromonacolin L-[lovastatin nonaketide synthase] thioesterase from Aspergillus terreus.